A 596-amino-acid polypeptide reads, in one-letter code: Elongation factor 4 (596 aa).

The tr-type G domain maps to K2–V184. GTP is bound by residues D14–T19 and N131–D134.

This sequence belongs to the TRAFAC class translation factor GTPase superfamily. Classic translation factor GTPase family. LepA subfamily.

The protein localises to the cell inner membrane. It carries out the reaction GTP + H2O = GDP + phosphate + H(+). Required for accurate and efficient protein synthesis under certain stress conditions. May act as a fidelity factor of the translation reaction, by catalyzing a one-codon backward translocation of tRNAs on improperly translocated ribosomes. Back-translocation proceeds from a post-translocation (POST) complex to a pre-translocation (PRE) complex, thus giving elongation factor G a second chance to translocate the tRNAs correctly. Binds to ribosomes in a GTP-dependent manner. In Pseudoalteromonas translucida (strain TAC 125), this protein is Elongation factor 4.